The chain runs to 284 residues: 2-dehydro-3-deoxyphosphooctonate aldolase (284 aa).

Belongs to the KdsA family.

Its subcellular location is the cytoplasm. It carries out the reaction D-arabinose 5-phosphate + phosphoenolpyruvate + H2O = 3-deoxy-alpha-D-manno-2-octulosonate-8-phosphate + phosphate. It functions in the pathway carbohydrate biosynthesis; 3-deoxy-D-manno-octulosonate biosynthesis; 3-deoxy-D-manno-octulosonate from D-ribulose 5-phosphate: step 2/3. The protein operates within bacterial outer membrane biogenesis; lipopolysaccharide biosynthesis. This is 2-dehydro-3-deoxyphosphooctonate aldolase from Glaesserella parasuis serovar 5 (strain SH0165) (Haemophilus parasuis).